Reading from the N-terminus, the 329-residue chain is Vanillate O-demethylase oxygenase subunit (329 aa).

The Rieske domain occupies 1 to 84 (MICNERMVIY…AQERHGFIWV (84 aa)). The [2Fe-2S] cluster site is built by Cys24, His26, Cys43, and His46.

The protein belongs to the bacterial ring-hydroxylating dioxygenase alpha subunit family. In terms of assembly, this demethylase system consists of two proteins: an oxygenase and an oxygenase reductase. It depends on [2Fe-2S] cluster as a cofactor. Fe cation is required as a cofactor.

The catalysed reaction is vanillate + NADH + O2 + H(+) = 3,4-dihydroxybenzoate + formaldehyde + NAD(+) + H2O. The protein operates within xenobiotic degradation; vanillyl-alcohol degradation. The chain is Vanillate O-demethylase oxygenase subunit (vanA) from Pseudomonas sp. (strain ATCC 19151).